A 143-amino-acid polypeptide reads, in one-letter code: Large ribosomal subunit protein uL15 (143 aa).

The disordered stretch occupies residues 20 to 52 (GRGIGSGKGKTAGRGHKGQHSRAGGYHKVGFEG). Residues 30–39 (TAGRGHKGQH) show a composition bias toward basic residues.

It belongs to the universal ribosomal protein uL15 family. In terms of assembly, part of the 50S ribosomal subunit.

Functionally, binds to the 23S rRNA. This Coxiella burnetii (strain CbuG_Q212) (Coxiella burnetii (strain Q212)) protein is Large ribosomal subunit protein uL15.